A 130-amino-acid polypeptide reads, in one-letter code: General stress protein 13 (130 aa).

The S1 motif domain maps to 8–77; it reads GSVYTGKVTG…EKGKISLSIR (70 aa). Residues 76-109 form a disordered region; that stretch reads IRATQAAPEKKESKPRKPKAAQVSEEASTPQGFN. Residues 100–109 show a composition bias toward polar residues; it reads EEASTPQGFN.

As to quaternary structure, found in association with the 30S subunit of the ribosome.

The protein localises to the cytoplasm. The chain is General stress protein 13 (yugI) from Bacillus subtilis (strain 168).